Here is a 578-residue protein sequence, read N- to C-terminus: Proline--tRNA ligase (578 aa).

This sequence belongs to the class-II aminoacyl-tRNA synthetase family. ProS type 1 subfamily. Homodimer.

It is found in the cytoplasm. It carries out the reaction tRNA(Pro) + L-proline + ATP = L-prolyl-tRNA(Pro) + AMP + diphosphate. In terms of biological role, catalyzes the attachment of proline to tRNA(Pro) in a two-step reaction: proline is first activated by ATP to form Pro-AMP and then transferred to the acceptor end of tRNA(Pro). As ProRS can inadvertently accommodate and process non-cognate amino acids such as alanine and cysteine, to avoid such errors it has two additional distinct editing activities against alanine. One activity is designated as 'pretransfer' editing and involves the tRNA(Pro)-independent hydrolysis of activated Ala-AMP. The other activity is designated 'posttransfer' editing and involves deacylation of mischarged Ala-tRNA(Pro). The misacylated Cys-tRNA(Pro) is not edited by ProRS. This Burkholderia mallei (strain ATCC 23344) protein is Proline--tRNA ligase.